We begin with the raw amino-acid sequence, 461 residues long: Putative 2,3-dihydroxypropane-1-sulfonate exporter (461 aa).

The Cytoplasmic portion of the chain corresponds to 1-20 (MSHITTEDPATLRLPFKEKL). The chain crosses the membrane as a helical span at residues 21-41 (SYGIGDLASNILLDIGTLYLL). Residues 42–47 (KFYTDV) are Periplasmic-facing. Residues 48-68 (LGLPGTYGGIIFLISKFFTAF) traverse the membrane as a helical segment. Residues 69–92 (TDMGTGIMLDSRRKIGPKGKFRPF) are Cytoplasmic-facing. Residues 93–113 (ILYASFPVTLLAIANFVGTPF) form a helical membrane-spanning segment. Residues 114–123 (DVTGKTVMAT) lie on the Periplasmic side of the membrane. A helical transmembrane segment spans residues 124 to 144 (ILFMLYGLFFSMMNCSYGAMV). Topologically, residues 145 to 162 (PAITKNPNERASLAAWRQ) are cytoplasmic. The helical transmembrane segment at 163-183 (GGATLGLLLCTVGFVPVMNLI) threads the bilayer. The Periplasmic portion of the chain corresponds to 184–188 (EGNQQ). The helical transmembrane segment at 189–209 (LGYIFAATLFSLFGLLFMWIC) threads the bilayer. Residues 210–243 (YSGVKERYVETQPANPAQKPGLLQSFRAIAGNRP) lie on the Cytoplasmic side of the membrane. A helical transmembrane segment spans residues 244-264 (LFILCIANLCTLGAFNVKLAI). Over 265 to 276 (QVYYTQYVLNDP) the chain is Periplasmic. The helical transmembrane segment at 277 to 297 (ILLSYMGFFSMGCIFIGVFLM) threads the bilayer. Over 298–308 (PASVRRFGKKK) the chain is Cytoplasmic. A helical membrane pass occupies residues 309–329 (VYIGGLLIWVLGDLLNYFFGG). Gly330 is a topological domain (periplasmic). A helical transmembrane segment spans residues 331–351 (SVSFVAFSCLAFFGSAFVNSL). Topologically, residues 352–387 (NWALVSDTVEYGEWRTGVRSEGTVYTGFTFFRKVSQ) are cytoplasmic. A helical transmembrane segment spans residues 388 to 408 (ALAGFFPGWMLTQIGYVPNVA). Topologically, residues 409–419 (QADHTIEGLRQ) are periplasmic. A helical membrane pass occupies residues 420–440 (LIFIYPSALAVVTIVAMGCFY). Residues 441-461 (SLNEKMYVRIVEEIEARKRTA) are Cytoplasmic-facing.

The protein belongs to the sodium:galactoside symporter (TC 2.A.2) family.

It localises to the cell inner membrane. In terms of biological role, could be involved in the export of 2,3-dihydroxypropane-1-sulfonate (DHPS). The sequence is that of Putative 2,3-dihydroxypropane-1-sulfonate exporter (yihP) from Escherichia coli (strain K12).